Consider the following 244-residue polypeptide: Transcriptional activator protein anr (244 aa).

21–149 serves as a coordination point for a nucleoside 3',5'-cyclic phosphate; the sequence is APLCLPLSLT…RLMSREIRDD (129 aa). The 74-residue stretch at 159-232 folds into the HTH crp-type domain; sequence KTADERIATF…GKEVHILDSI (74 aa). Positions 192–211 form a DNA-binding region, H-T-H motif; it reads RNEIGNYLGLAVETVSRVFT.

Its function is as follows. Transcriptional activator of anaerobic gene expression. This Pseudomonas aeruginosa (strain ATCC 15692 / DSM 22644 / CIP 104116 / JCM 14847 / LMG 12228 / 1C / PRS 101 / PAO1) protein is Transcriptional activator protein anr (anr).